The sequence spans 139 residues: MAIERTLSILKPDAVKNNITGNINSYIEQSGLKITAQKMMLLTKKQAELFYEIHKDRPFFGELVEFMTSGSVVVQVLVGENAVSKYRQIMGATDPKQADKGTIRGDFADDISENRVHGSDSLENARKEIAFFFAECELV.

Lys-11, Phe-59, Arg-87, Thr-93, Arg-104, and Asn-114 together coordinate ATP. His-117 (pros-phosphohistidine intermediate) is an active-site residue.

It belongs to the NDK family. As to quaternary structure, homotetramer. Mg(2+) serves as cofactor.

The protein resides in the cytoplasm. The enzyme catalyses a 2'-deoxyribonucleoside 5'-diphosphate + ATP = a 2'-deoxyribonucleoside 5'-triphosphate + ADP. The catalysed reaction is a ribonucleoside 5'-diphosphate + ATP = a ribonucleoside 5'-triphosphate + ADP. In terms of biological role, major role in the synthesis of nucleoside triphosphates other than ATP. The ATP gamma phosphate is transferred to the NDP beta phosphate via a ping-pong mechanism, using a phosphorylated active-site intermediate. This chain is Nucleoside diphosphate kinase, found in Wolbachia pipientis wMel.